The following is a 152-amino-acid chain: Transcriptional regulator MraZ (152 aa).

SpoVT-AbrB domains are found at residues 5–52 (ATLV…PLPE) and 81–124 (ASEC…DEQT).

This sequence belongs to the MraZ family. In terms of assembly, forms oligomers.

It localises to the cytoplasm. Its subcellular location is the nucleoid. Negatively regulates its own expression and that of the subsequent genes in the proximal part of the division and cell wall (dcw) gene cluster. Acts by binding directly to DNA. May also regulate the expression of genes outside the dcw cluster. The polypeptide is Transcriptional regulator MraZ (Erwinia tasmaniensis (strain DSM 17950 / CFBP 7177 / CIP 109463 / NCPPB 4357 / Et1/99)).